The sequence spans 883 residues: Phosphoenolpyruvate carboxylase (883 aa).

Catalysis depends on residues His-138 and Lys-546.

The protein belongs to the PEPCase type 1 family. It depends on Mg(2+) as a cofactor.

The catalysed reaction is oxaloacetate + phosphate = phosphoenolpyruvate + hydrogencarbonate. Functionally, forms oxaloacetate, a four-carbon dicarboxylic acid source for the tricarboxylic acid cycle. This is Phosphoenolpyruvate carboxylase from Escherichia coli O7:K1 (strain IAI39 / ExPEC).